Here is a 234-residue protein sequence, read N- to C-terminus: uncharacterized protein (234 aa).

The interval 212–234 is disordered; sequence GKHLKLDSNTTENKTTKQNETGG. Residues 220–234 show a composition bias toward low complexity; that stretch reads NTTENKTTKQNETGG.

This is an uncharacterized protein from Methanothermobacter thermautotrophicus (Methanobacterium thermoformicicum).